The chain runs to 318 residues: Basic leucine zipper (bZIP) transcription factor atfB (318 aa).

Positions 114 to 157 (FNSSPPEYAPPKHRSSLSEQSQTDGYGVSTRRRKASAIDQCEQQ) are disordered. Positions 160–199 (REKREKFLERNRLAASKCRQKKKEHTKLLETRFREVSNKK) are basic motif. One can recognise a bZIP domain in the interval 160-223 (REKREKFLER…LNLKNEMLRH (64 aa)). The tract at residues 202-216 (LESEIEHLRSEVLNL) is leucine-zipper. The disordered stretch occupies residues 275 to 301 (DGPMQLPSEMGSPLDQRRDSEQSIMTE).

Belongs to the bZIP family. ATF subfamily.

Its subcellular location is the nucleus. Functionally, transcription factor that acts as a key player in the regulatory circuit that integrates secondary metabolism and cellular response to oxidative stress. Regulates the genes involved in development and stress response through direct binding to their promoters. Particularly involved in the resistance to oxidative stress in asexual conidiospores. The protein is Basic leucine zipper (bZIP) transcription factor atfB of Aspergillus oryzae (strain ATCC 42149 / RIB 40) (Yellow koji mold).